An 84-amino-acid chain; its full sequence is Sec-independent protein translocase protein TatA (84 aa).

The chain crosses the membrane as a helical span at residues 1–21 (MGGFSIWHWLIVLLIVVMVFG). The segment at 40–84 (KDGMKDGGQSPADEKPVVPASQVTNAQAADKAERNTIDVEARQKS) is disordered. The span at 69–84 (DKAERNTIDVEARQKS) shows a compositional bias: basic and acidic residues.

This sequence belongs to the TatA/E family. The Tat system comprises two distinct complexes: a TatABC complex, containing multiple copies of TatA, TatB and TatC subunits, and a separate TatA complex, containing only TatA subunits. Substrates initially bind to the TatABC complex, which probably triggers association of the separate TatA complex to form the active translocon.

It is found in the cell inner membrane. In terms of biological role, part of the twin-arginine translocation (Tat) system that transports large folded proteins containing a characteristic twin-arginine motif in their signal peptide across membranes. TatA could form the protein-conducting channel of the Tat system. This chain is Sec-independent protein translocase protein TatA, found in Polaromonas naphthalenivorans (strain CJ2).